We begin with the raw amino-acid sequence, 354 residues long: Phospho-N-acetylmuramoyl-pentapeptide-transferase (354 aa).

10 helical membrane-spanning segments follow: residues 16 to 36, 66 to 86, 88 to 108, 130 to 150, 168 to 188, 193 to 213, 227 to 247, 257 to 277, 282 to 302, and 331 to 351; these read YITV…LYLM, TPTM…LLTV, IHNP…AIGV, FFLQ…YAHL, IFGI…VNLT, GLAT…TYIT, IIGV…LIGF, VFMG…MAII, VLLI…IIQV, and KIIV…LITL.

It belongs to the glycosyltransferase 4 family. MraY subfamily. The cofactor is Mg(2+).

The protein resides in the cell inner membrane. The enzyme catalyses UDP-N-acetyl-alpha-D-muramoyl-L-alanyl-gamma-D-glutamyl-meso-2,6-diaminopimeloyl-D-alanyl-D-alanine + di-trans,octa-cis-undecaprenyl phosphate = di-trans,octa-cis-undecaprenyl diphospho-N-acetyl-alpha-D-muramoyl-L-alanyl-D-glutamyl-meso-2,6-diaminopimeloyl-D-alanyl-D-alanine + UMP. It functions in the pathway cell wall biogenesis; peptidoglycan biosynthesis. Functionally, catalyzes the initial step of the lipid cycle reactions in the biosynthesis of the cell wall peptidoglycan: transfers peptidoglycan precursor phospho-MurNAc-pentapeptide from UDP-MurNAc-pentapeptide onto the lipid carrier undecaprenyl phosphate, yielding undecaprenyl-pyrophosphoryl-MurNAc-pentapeptide, known as lipid I. This is Phospho-N-acetylmuramoyl-pentapeptide-transferase from Nitratiruptor sp. (strain SB155-2).